The following is a 290-amino-acid chain: Sodium/potassium-transporting ATPase subunit beta-2 (290 aa).

Residues 1–39 (MVIQKEKKSCGQVVEEWKEFVWNPRTHQFMGRTGTSWAF) are Cytoplasmic-facing. The chain crosses the membrane as a helical; Signal-anchor for type II membrane protein span at residues 40 to 67 (ILLFYLVFYGFLTAMFTLTMWVMLQTVS). The Extracellular segment spans residues 68–290 (DHTPKYQDRL…VAFKLRINKA (223 aa)). Residues asparagine 96 and asparagine 118 are each glycosylated (N-linked (GlcNAc...) asparagine). An intrachain disulfide couples cysteine 129 to cysteine 150. N-linked (GlcNAc...) asparagine glycosylation is found at asparagine 153 and asparagine 159. The cysteines at positions 160 and 177 are disulfide-linked. N-linked (GlcNAc...) asparagine glycans are attached at residues asparagine 193, asparagine 197, and asparagine 238. An immunoglobulin-like region spans residues 193–290 (NQSMNVTCVG…VAFKLRINKA (98 aa)). Cysteine 200 and cysteine 261 are oxidised to a cystine.

Belongs to the X(+)/potassium ATPases subunit beta family. As to quaternary structure, the sodium/potassium-transporting ATPase is composed of a catalytic alpha subunit, an auxiliary non-catalytic beta subunit and an additional regulatory subunit. Interacts with isoform 2 of BSG. In terms of tissue distribution, highly expressed in brain (at protein level).

The protein resides in the cell membrane. In terms of biological role, this is the non-catalytic component of the active enzyme, which catalyzes the hydrolysis of ATP coupled with the exchange of Na(+) and K(+) ions across the plasma membrane. The exact function of the beta-2 subunit is not known. Mediates cell adhesion of neurons and astrocytes, and promotes neurite outgrowth. The protein is Sodium/potassium-transporting ATPase subunit beta-2 (Atp1b2) of Rattus norvegicus (Rat).